The following is a 324-amino-acid chain: Endochitinase A2 (324 aa).

An N-terminal signal peptide occupies residues 1–20 (MSKLRIPILLVLFIVSCCSA). Residues 21-61 (EQCGTQAGGALCPGGLCCSKFGWCGSTSEYCGDGCQSQCSG) enclose the Chitin-binding type-1 domain. Disulfide bonds link Cys-23/Cys-38, Cys-32/Cys-44, Cys-37/Cys-51, and Cys-55/Cys-59. The active-site Proton donor is Glu-133. 2 disulfide bridges follow: Cys-151–Cys-170 and Cys-269–Cys-301. A propeptide spans 310-324 (SLPLSSILLDTVAAA) (removed in mature form).

Belongs to the glycosyl hydrolase 19 family. Chitinase class I subfamily.

The enzyme catalyses Random endo-hydrolysis of N-acetyl-beta-D-glucosaminide (1-&gt;4)-beta-linkages in chitin and chitodextrins.. Defense against chitin-containing fungal pathogens. The chain is Endochitinase A2 (CHI2) from Pisum sativum (Garden pea).